Consider the following 1089-residue polypeptide: Carbamoyl phosphate synthase large chain (1089 aa).

A carboxyphosphate synthetic domain region spans residues 1–399 (MPKRTDIKSI…SIQKALCSLE (399 aa)). ATP-binding residues include Arg127, Arg167, Gly173, Gly174, Glu206, Leu208, Glu213, Gly239, Val240, His241, Gln283, and Glu297. Positions 131-326 (KECMKKIGMD…IAKVATLLAV (196 aa)) constitute an ATP-grasp 1 domain. Mg(2+) contacts are provided by Gln283, Glu297, and Asn299. Positions 283, 297, and 299 each coordinate Mn(2+). The segment at 400–553 (RSLSGFDRVK…NVSELTQSKN (154 aa)) is oligomerization domain. A carbamoyl phosphate synthetic domain region spans residues 554–951 (DAKDKKEKKV…SYAKSQIASF (398 aa)). Residues 680–871 (AEFITKLGIN…LAKVATRVMW (192 aa)) enclose the ATP-grasp 2 domain. ATP is bound by residues Arg716, Gln755, Leu757, Glu762, Gly787, Ile788, His789, Ser790, Gln830, and Glu842. The Mg(2+) site is built by Gln830, Glu842, and Asn844. Positions 830, 842, and 844 each coordinate Mn(2+). The 138-residue stretch at 952–1089 (NHLPEQGVVF…VKSLQEWLKS (138 aa)) folds into the MGS-like domain. An allosteric domain region spans residues 952 to 1089 (NHLPEQGVVF…VKSLQEWLKS (138 aa)).

This sequence belongs to the CarB family. As to quaternary structure, composed of two chains; the small (or glutamine) chain promotes the hydrolysis of glutamine to ammonia, which is used by the large (or ammonia) chain to synthesize carbamoyl phosphate. Tetramer of heterodimers (alpha,beta)4. Mg(2+) serves as cofactor. Mn(2+) is required as a cofactor.

The enzyme catalyses hydrogencarbonate + L-glutamine + 2 ATP + H2O = carbamoyl phosphate + L-glutamate + 2 ADP + phosphate + 2 H(+). It carries out the reaction hydrogencarbonate + NH4(+) + 2 ATP = carbamoyl phosphate + 2 ADP + phosphate + 2 H(+). It participates in amino-acid biosynthesis; L-arginine biosynthesis; carbamoyl phosphate from bicarbonate: step 1/1. It functions in the pathway pyrimidine metabolism; UMP biosynthesis via de novo pathway; (S)-dihydroorotate from bicarbonate: step 1/3. Large subunit of the glutamine-dependent carbamoyl phosphate synthetase (CPSase). CPSase catalyzes the formation of carbamoyl phosphate from the ammonia moiety of glutamine, carbonate, and phosphate donated by ATP, constituting the first step of 2 biosynthetic pathways, one leading to arginine and/or urea and the other to pyrimidine nucleotides. The large subunit (synthetase) binds the substrates ammonia (free or transferred from glutamine from the small subunit), hydrogencarbonate and ATP and carries out an ATP-coupled ligase reaction, activating hydrogencarbonate by forming carboxy phosphate which reacts with ammonia to form carbamoyl phosphate. This Campylobacter jejuni subsp. jejuni serotype O:2 (strain ATCC 700819 / NCTC 11168) protein is Carbamoyl phosphate synthase large chain.